We begin with the raw amino-acid sequence, 473 residues long: mRNA export factor ICP27 homolog (473 aa).

Disordered regions lie at residues 57 to 81 (QELLTERPSPDSKNSQGDDDSNSIY) and 123 to 143 (QTKRPHGTGNRKQYHRRNFPM). Zn(2+)-binding residues include C362, H438, C442, and C447. Residues 362–447 (CKYGTEKRSM…HTRRCSDPAC (86 aa)) form a CHC2-type zinc finger.

Belongs to the HHV-1 ICP27 protein family. In terms of assembly, associates in a complex with RNA, and host export factors NXF1/TAP and ALYREF; these interactions allow nuclear export of viral transcripts.

The protein resides in the host cytoplasm. It localises to the host nucleus. Functionally, multifunctional regulator of the expression of viral genes that mediates nuclear export of viral intronless mRNAs. This immediate early (EI) protein promotes the nuclear export of viral intronless mRNAs by interacting with mRNAs and host NXF1/TAP. This is mRNA export factor ICP27 homolog from Gallus gallus (Chicken).